Consider the following 1025-residue polypeptide: Multidrug resistance protein MdtC (1025 aa).

Helical transmembrane passes span 3–23 (FFAL…AITL), 333–353 (EVEQ…FLFL), 360–380 (IIPA…MYLC), 387–407 (LSLM…IVVL), 431–451 (VGFT…PLLL), 463–483 (FAVT…TLTP), 528–548 (LVGV…ISIP), 853–873 (VILI…LYES), 875–895 (VHPL…LLAL), 897–917 (LFNA…IGIV), 953–973 (PIMM…LSGG), and 984–1004 (ITIV…TPVV).

The protein belongs to the resistance-nodulation-cell division (RND) (TC 2.A.6) family. MdtC subfamily. Part of a tripartite efflux system composed of MdtA, MdtB and MdtC. MdtC forms a heteromultimer with MdtB.

It is found in the cell inner membrane. In terms of biological role, the MdtABC tripartite complex confers resistance against novobiocin and deoxycholate. The protein is Multidrug resistance protein MdtC of Escherichia coli O127:H6 (strain E2348/69 / EPEC).